The sequence spans 617 residues: DNA mismatch repair protein MutL (617 aa).

The protein belongs to the DNA mismatch repair MutL/HexB family.

In terms of biological role, this protein is involved in the repair of mismatches in DNA. It is required for dam-dependent methyl-directed DNA mismatch repair. May act as a 'molecular matchmaker', a protein that promotes the formation of a stable complex between two or more DNA-binding proteins in an ATP-dependent manner without itself being part of a final effector complex. The polypeptide is DNA mismatch repair protein MutL (Christiangramia forsetii (strain DSM 17595 / CGMCC 1.15422 / KT0803) (Gramella forsetii)).